Here is a 351-residue protein sequence, read N- to C-terminus: Probable galacturonosyltransferase-like 4 (351 aa).

At 1 to 8 (MASRSLSY) the chain is on the cytoplasmic side. Residues 9–29 (TQLLGLLSFILLLVTTTTMAV) form a helical; Signal-anchor for type II membrane protein membrane-spanning segment. Residues 30 to 351 (RVGVILHKPS…YRSSRHSLEE (322 aa)) are Lumenal-facing. 2 N-linked (GlcNAc...) asparagine glycosylation sites follow: Asn-96 and Asn-203.

The protein belongs to the glycosyltransferase 8 family.

It localises to the golgi apparatus membrane. The protein operates within glycan metabolism; pectin biosynthesis. May be involved in pectin and/or xylans biosynthesis in cell walls. In Arabidopsis thaliana (Mouse-ear cress), this protein is Probable galacturonosyltransferase-like 4 (GATL4).